Consider the following 92-residue polypeptide: Large ribosomal subunit protein bL27 (92 aa).

The propeptide occupies 1–9 (MLVMNLQYF).

Belongs to the bacterial ribosomal protein bL27 family. Post-translationally, the N-terminus is cleaved by ribosomal processing cysteine protease Prp.

The sequence is that of Large ribosomal subunit protein bL27 from Heliobacterium modesticaldum (strain ATCC 51547 / Ice1).